Here is a 517-residue protein sequence, read N- to C-terminus: MASSTAQSKKQFKRSMTKKSHSWWWDSHNCPKNSKWLAENLEKMDDRVNHMLKLIEEDADSFAKKAQMYFQKRPELIQLVEEFYRMYRALAERYDQASGELQKNHTSEIQSQSSLEISSPTKEKLSRRQSSHKEEEDSSSLTDSGSDSDHSSANDEDGDEALIRRMAELELELQETKQKLLLQQESVDGDNNVDLLHKITTYEGELKEANEKMRMHEDEIANLKNQLQSFMSFDTEDHLGAEQKSVDLDKEDTKEDAVATKVLALEEELSIAKEKLQHFEKETYSLKNELEIGKAAEEKLKSLQHELELAQRDADTYINKLNAEKKEVLKLQERLAMVKTSLQDRDNEIRALKTAVSDAEQKIFPEKAQIKGEMSKMLEERSQLGEQLRELESHIRLIKEEKAETEEKLRGGTEKISGMRDESNVLREEIGKREEKIKETEKHMEELHMEQVRLRRRSSELTEEVERTRVSASEMAEQKREAIRQLCMSLDHYRDGYDRLWRVVAGHKSKRVVVLST.

Disordered stretches follow at residues 1-29 (MASSTAQSKKQFKRSMTKKSHSWWWDSHN) and 101-159 (LQKN…EDGD). Over residues 10–21 (KQFKRSMTKKSH) the composition is skewed to basic residues. Positions 21–101 (HSWWWDSHNC…ERYDQASGEL (81 aa)) constitute an NAB domain. Residues 107 to 119 (SEIQSQSSLEISS) are compositionally biased toward low complexity. Over residues 121–135 (TKEKLSRRQSSHKEE) the composition is skewed to basic and acidic residues. Positions 156 to 486 (EDGDEALIRR…EQKREAIRQL (331 aa)) form a coiled coil.

The protein belongs to the NET family.

In terms of biological role, plant-specific actin binding protein. May be part of a membrane-cytoskeletal adapter complex. The sequence is that of Protein NETWORKED 4B from Arabidopsis thaliana (Mouse-ear cress).